A 416-amino-acid polypeptide reads, in one-letter code: UDP-N-acetylmuramoylalanine--D-glutamate ligase (416 aa).

An ATP-binding site is contributed by 104–110; that stretch reads GSNGKST.

This sequence belongs to the MurCDEF family.

It localises to the cytoplasm. It carries out the reaction UDP-N-acetyl-alpha-D-muramoyl-L-alanine + D-glutamate + ATP = UDP-N-acetyl-alpha-D-muramoyl-L-alanyl-D-glutamate + ADP + phosphate + H(+). The protein operates within cell wall biogenesis; peptidoglycan biosynthesis. In terms of biological role, cell wall formation. Catalyzes the addition of glutamate to the nucleotide precursor UDP-N-acetylmuramoyl-L-alanine (UMA). The polypeptide is UDP-N-acetylmuramoylalanine--D-glutamate ligase (Francisella tularensis subsp. holarctica (strain FTNF002-00 / FTA)).